A 900-amino-acid polypeptide reads, in one-letter code: Protein translocase subunit SecA (900 aa).

ATP is bound by residues Gln87, 105–109 (GEGKT), and Asp512. The segment at 849-900 (ERLAQQQQFSHQEEDSLNTGSPAQADRKIGRNDPCPCGSGKKYKQCHGRLQK) is disordered. Cys883, Cys885, Cys894, and His895 together coordinate Zn(2+). Positions 889–900 (KKYKQCHGRLQK) are enriched in basic residues.

It belongs to the SecA family. Monomer and homodimer. Part of the essential Sec protein translocation apparatus which comprises SecA, SecYEG and auxiliary proteins SecDF-YajC and YidC. The cofactor is Zn(2+).

It is found in the cell inner membrane. The protein localises to the cytoplasm. It carries out the reaction ATP + H2O + cellular proteinSide 1 = ADP + phosphate + cellular proteinSide 2.. Functionally, part of the Sec protein translocase complex. Interacts with the SecYEG preprotein conducting channel. Has a central role in coupling the hydrolysis of ATP to the transfer of proteins into and across the cell membrane, serving both as a receptor for the preprotein-SecB complex and as an ATP-driven molecular motor driving the stepwise translocation of polypeptide chains across the membrane. In Pectobacterium atrosepticum (strain SCRI 1043 / ATCC BAA-672) (Erwinia carotovora subsp. atroseptica), this protein is Protein translocase subunit SecA.